The following is a 291-amino-acid chain: Methionine aminopeptidase (291 aa).

Residue H65 participates in substrate binding. D85, D96, and H155 together coordinate a divalent metal cation. H163 contacts substrate. A divalent metal cation contacts are provided by E188 and E276.

This sequence belongs to the peptidase M24A family. Methionine aminopeptidase archaeal type 2 subfamily. In terms of assembly, monomer. Co(2+) is required as a cofactor. Requires Zn(2+) as cofactor. Mn(2+) serves as cofactor. It depends on Fe(2+) as a cofactor.

The catalysed reaction is Release of N-terminal amino acids, preferentially methionine, from peptides and arylamides.. Functionally, removes the N-terminal methionine from nascent proteins. The N-terminal methionine is often cleaved when the second residue in the primary sequence is small and uncharged (Met-Ala-, Cys, Gly, Pro, Ser, Thr, or Val). This is Methionine aminopeptidase from Archaeoglobus fulgidus (strain ATCC 49558 / DSM 4304 / JCM 9628 / NBRC 100126 / VC-16).